The primary structure comprises 313 residues: Olfactory receptor 1G1 (313 aa).

Topologically, residues 1–25 are extracellular; sequence MEGKNLTSISEFFLLGFSEQLEEQK. Asn5 carries an N-linked (GlcNAc...) asparagine glycan. Residues 26–49 traverse the membrane as a helical segment; the sequence is ALFGSFLFMYLVTVAGNLLIILVI. Residues 50-57 lie on the Cytoplasmic side of the membrane; the sequence is ITDTQLHT. The chain crosses the membrane as a helical span at residues 58–79; sequence PMYFFLANLSLADACFVSTTVP. Topologically, residues 80–100 are extracellular; that stretch reads KMLANIQIQSQAISYSGCLLQ. A disulfide bridge connects residues Cys97 and Cys189. Residues 101 to 120 form a helical membrane-spanning segment; it reads LYFFMLFVMLEAFLLAVMAY. Residues 121-140 are Cytoplasmic-facing; it reads DRYVAICHPLHYILIMSPGL. A helical membrane pass occupies residues 141–158; that stretch reads CVFLVSASWIMNALHSLL. Residues 159-196 are Extracellular-facing; that stretch reads HTLLMNSLSFCANHEIPHFFCDIDPLLSLSCTDPFTNE. Residues 197-219 form a helical membrane-spanning segment; sequence LVIFITGGLTGLVCVLCLIISYT. Residues 220–236 lie on the Cytoplasmic side of the membrane; the sequence is NIFSTILKIPSAQGKRK. A helical transmembrane segment spans residues 237-259; it reads AFSTCGSHLSVVSLFFGTSFCVY. The Extracellular portion of the chain corresponds to 260 to 272; that stretch reads FIPPSTRSAQKDT. The chain crosses the membrane as a helical span at residues 273 to 292; the sequence is VASVMYTVVTPMLNPFIYSL. The Cytoplasmic segment spans residues 293 to 313; the sequence is RNQEIKSSLRKLIWVREIHSP.

Belongs to the G-protein coupled receptor 1 family.

The protein resides in the cell membrane. Odorant receptor. This chain is Olfactory receptor 1G1 (OR1G1), found in Gorilla gorilla gorilla (Western lowland gorilla).